Consider the following 216-residue polypeptide: 3-isopropylmalate dehydratase small subunit (216 aa).

The protein belongs to the LeuD family. LeuD type 1 subfamily. In terms of assembly, heterodimer of LeuC and LeuD.

It catalyses the reaction (2R,3S)-3-isopropylmalate = (2S)-2-isopropylmalate. It participates in amino-acid biosynthesis; L-leucine biosynthesis; L-leucine from 3-methyl-2-oxobutanoate: step 2/4. Its function is as follows. Catalyzes the isomerization between 2-isopropylmalate and 3-isopropylmalate, via the formation of 2-isopropylmaleate. This chain is 3-isopropylmalate dehydratase small subunit, found in Methylibium petroleiphilum (strain ATCC BAA-1232 / LMG 22953 / PM1).